A 355-amino-acid chain; its full sequence is Peptide chain release factor 1 (355 aa).

Glutamine 233 bears the N5-methylglutamine mark.

Belongs to the prokaryotic/mitochondrial release factor family. Methylated by PrmC. Methylation increases the termination efficiency of RF1.

The protein localises to the cytoplasm. Functionally, peptide chain release factor 1 directs the termination of translation in response to the peptide chain termination codons UAG and UAA. This is Peptide chain release factor 1 from Bacillus mycoides (strain KBAB4) (Bacillus weihenstephanensis).